We begin with the raw amino-acid sequence, 667 residues long: Long-chain-fatty-acid--CoA ligase ACSBG2 (667 aa).

Residues 227 to 235 (TSGTTGTPK), 418 to 423 (EIYGMS), Asp496, Arg511, and Arg624 each bind ATP.

It belongs to the ATP-dependent AMP-binding enzyme family. Bubblegum subfamily. Testis- and brainstem-specific. Expressed in pubertal and adult testis. Enriched in germ cells and Sertoli cells while present at a lower level in Leydig cells. Present in testicular Sertoli cells and large motoneurons in the medulla oblongata and cervical spinal cord (at protein level).

The protein resides in the cytoplasm. It is found in the membrane. The catalysed reaction is a long-chain fatty acid + ATP + CoA = a long-chain fatty acyl-CoA + AMP + diphosphate. It catalyses the reaction (5Z,8Z,11Z,14Z)-eicosatetraenoate + ATP + CoA = (5Z,8Z,11Z,14Z)-eicosatetraenoyl-CoA + AMP + diphosphate. The enzyme catalyses hexadecanoate + ATP + CoA = hexadecanoyl-CoA + AMP + diphosphate. It carries out the reaction (9Z)-octadecenoate + ATP + CoA = (9Z)-octadecenoyl-CoA + AMP + diphosphate. The catalysed reaction is (9Z,12Z)-octadecadienoate + ATP + CoA = (9Z,12Z)-octadecadienoyl-CoA + AMP + diphosphate. It catalyses the reaction tetracosanoate + ATP + CoA = tetracosanoyl-CoA + AMP + diphosphate. In terms of biological role, catalyzes the conversion of fatty acids such as long chain and very long-chain fatty acids to their active form acyl-CoAs for both synthesis of cellular lipids, and degradation via beta-oxidation. Can activate diverse saturated, monosaturated and polyunsaturated fatty acids. Has increased ability to activate oleic and linoleic acid. May play a role in spermatogenesis. This Mus musculus (Mouse) protein is Long-chain-fatty-acid--CoA ligase ACSBG2.